Consider the following 214-residue polypeptide: Probable transaldolase (214 aa).

The Schiff-base intermediate with substrate role is filled by lysine 83.

The protein belongs to the transaldolase family. Type 3B subfamily.

It is found in the cytoplasm. The catalysed reaction is D-sedoheptulose 7-phosphate + D-glyceraldehyde 3-phosphate = D-erythrose 4-phosphate + beta-D-fructose 6-phosphate. It functions in the pathway carbohydrate degradation; pentose phosphate pathway; D-glyceraldehyde 3-phosphate and beta-D-fructose 6-phosphate from D-ribose 5-phosphate and D-xylulose 5-phosphate (non-oxidative stage): step 2/3. Transaldolase is important for the balance of metabolites in the pentose-phosphate pathway. The protein is Probable transaldolase of Clostridium tetani (strain Massachusetts / E88).